An 85-amino-acid polypeptide reads, in one-letter code: RNA-binding protein Hfq (85 aa).

Residues 9–68 (DPFLNALRRERIPVSIYLVNGIKLQGQIESFDQFVILLKNTVNQMVYKHAISTVVPARPV) enclose the Sm domain. Residues 66–85 (RPVNHHHASDRPATLEKTEE) are disordered. The segment covering 72-85 (HASDRPATLEKTEE) has biased composition (basic and acidic residues).

It belongs to the Hfq family. Homohexamer.

Functionally, RNA chaperone that binds small regulatory RNA (sRNAs) and mRNAs to facilitate mRNA translational regulation in response to envelope stress, environmental stress and changes in metabolite concentrations. Also binds with high specificity to tRNAs. This Photobacterium profundum (strain SS9) protein is RNA-binding protein Hfq.